The chain runs to 443 residues: Methyl-coenzyme M reductase subunit beta (443 aa).

Tyrosine 367 serves as a coordination point for coenzyme M. Residue glycine 369 participates in coenzyme B binding.

This sequence belongs to the methyl-coenzyme M reductase beta subunit family. As to quaternary structure, MCR is a hexamer of two alpha, two beta, and two gamma chains, forming a dimer of heterotrimers. Coenzyme F430 serves as cofactor.

It is found in the cytoplasm. The catalysed reaction is coenzyme B + methyl-coenzyme M = methane + coenzyme M-coenzyme B heterodisulfide. Its pathway is one-carbon metabolism; methyl-coenzyme M reduction; methane from methyl-coenzyme M: step 1/1. Component of the methyl-coenzyme M reductase (MCR) I that catalyzes the reductive cleavage of methyl-coenzyme M (CoM-S-CH3 or 2-(methylthio)ethanesulfonate) using coenzyme B (CoB or 7-mercaptoheptanoylthreonine phosphate) as reductant which results in the production of methane and the mixed heterodisulfide of CoB and CoM (CoM-S-S-CoB). This is the final step in methanogenesis. The chain is Methyl-coenzyme M reductase subunit beta (mcrB) from Methanococcus vannielii.